The primary structure comprises 702 residues: Ribosomal RNA large subunit methyltransferase K/L (702 aa).

The 112-residue stretch at 43–154 (LIYQSLMWSR…KETASIALDL (112 aa)) folds into the THUMP domain.

It belongs to the methyltransferase superfamily. RlmKL family.

It localises to the cytoplasm. The catalysed reaction is guanosine(2445) in 23S rRNA + S-adenosyl-L-methionine = N(2)-methylguanosine(2445) in 23S rRNA + S-adenosyl-L-homocysteine + H(+). The enzyme catalyses guanosine(2069) in 23S rRNA + S-adenosyl-L-methionine = N(2)-methylguanosine(2069) in 23S rRNA + S-adenosyl-L-homocysteine + H(+). Specifically methylates the guanine in position 2445 (m2G2445) and the guanine in position 2069 (m7G2069) of 23S rRNA. The protein is Ribosomal RNA large subunit methyltransferase K/L of Salmonella agona (strain SL483).